Here is a 427-residue protein sequence, read N- to C-terminus: Glucose-1-phosphate adenylyltransferase (427 aa).

Residues Y121, G186, 201 to 202 (EK), and S219 contribute to the alpha-D-glucose 1-phosphate site.

Belongs to the bacterial/plant glucose-1-phosphate adenylyltransferase family. Homotetramer.

It catalyses the reaction alpha-D-glucose 1-phosphate + ATP + H(+) = ADP-alpha-D-glucose + diphosphate. Its pathway is glycan biosynthesis; glycogen biosynthesis. Functionally, involved in the biosynthesis of ADP-glucose, a building block required for the elongation reactions to produce glycogen. Catalyzes the reaction between ATP and alpha-D-glucose 1-phosphate (G1P) to produce pyrophosphate and ADP-Glc. The protein is Glucose-1-phosphate adenylyltransferase of Corynebacterium diphtheriae (strain ATCC 700971 / NCTC 13129 / Biotype gravis).